The primary structure comprises 348 residues: CCAAT/enhancer-binding protein beta (348 aa).

The required for Lys-174 sumoylation stretch occupies residues 1 to 24 (MQRLVVWDPVCLPLPPPPPAFKSM). Position 3 is an asymmetric dimethylarginine; by CARM1 (Arg3). Positions 24–135 (MEVANFYYEA…YGGKNCKKAA (112 aa)) are required for MYC transcriptional repression. Lys43 bears the N6-acetyllysine; alternate mark. Residue Lys43 is modified to N6-methylated lysine; alternate. 2 disordered regions span residues 44 to 65 (AAPA…ELGS) and 79 to 112 (LEPL…ASSG). Over residues 47 to 59 (AAPPADRPGPRPP) the composition is skewed to pro residues. A 9aaTAD motif is present at residues 116 to 124 (DFLSDLFSD). N6-acetyllysine; by KAT2A and KAT2B occurs at positions 129 and 132. An N6-acetyllysine; by KAT2A and KAT2B; alternate modification is found at Lys133. Residue Lys133 forms a Glycyl lysine isopeptide (Lys-Gly) (interchain with G-Cter in SUMO2); alternate linkage. The disordered stretch occupies residues 158 to 178 (APLHPPPPPPPPPAELKAEPG). The span at 160-171 (LHPPPPPPPPPA) shows a compositional bias: pro residues. Lys174 is covalently cross-linked (Glycyl lysine isopeptide (Lys-Gly) (interchain with G-Cter in SUMO2); alternate). Lys174 participates in a covalent cross-link: Glycyl lysine isopeptide (Lys-Gly) (interchain with G-Cter in SUMO); alternate. Glycyl lysine isopeptide (Lys-Gly) (interchain with G-Cter in SUMO2) cross-links involve residues Lys185 and Lys187. Residues 219–259 (SGSSGSLSTSSSSSPPGTPSPADAKATPAAAACYAGAAPAP) show a composition bias toward low complexity. Positions 219 to 277 (SGSSGSLSTSSSSSPPGTPSPADAKATPAAAACYAGAAPAPSQVKSKAKKTVDKHSDEY) are disordered. Thr227 carries the phosphothreonine; by GSK3-beta modification. O-linked (GlcNAc) serine glycans are attached at residues Ser228 and Ser229. A Phosphoserine; by GSK3-beta modification is found at Ser232. A Phosphothreonine; by RPS6KA1, CDK2 and MAPK modification is found at Thr236. Glycyl lysine isopeptide (Lys-Gly) (interchain with G-Cter in SUMO2) cross-links involve residues Lys263 and Lys265. Positions 268–277 (KTVDKHSDEY) are enriched in basic and acidic residues. At Thr269 the chain carries Phosphothreonine; by RPS6KA1 and PKC/PRKCA. The bZIP domain occupies 274–337 (SDEYKIRRER…STLRNLFKTL (64 aa)). Positions 278–298 (KIRRERNNIAVRKSRDKAKMR) are basic motif. Ser291 carries the post-translational modification Phosphoserine; by PKC/PRKCA. Positions 300–307 (LETQHKVL) are leucine-zipper. Ser328 is subject to Phosphoserine; by CaMK2. Lys335 is covalently cross-linked (Glycyl lysine isopeptide (Lys-Gly) (interchain with G-Cter in SUMO2)).

The protein belongs to the bZIP family. C/EBP subfamily. As to quaternary structure, binds DNA as a homodimer and as a heterodimer. Interacts with ATF4. Binds DNA as a heterodimer with ATF4. Interacts with MYB; within the complex, MYB and CEBPB bind to different promoter regions. Can form stable heterodimers with CEBPA, CEBPD and CEBPG. Interacts with SIX1. Interacts with TRIM28 and PTGES2. Interacts with PRDM16. Interacts with CCDC85B. Forms a complex with THOC5. Interacts with ZNF638; this interaction increases transcriptional activation. Interacts with CIDEA and CIDEC; these interactions increase transcriptional activation of a subset of CEBPB downstream target genes. Interacts with DDIT3/CHOP. Interacts with EP300; recruits EP300 to chromatin. Interacts with RORA; the interaction disrupts interaction with EP300. Interacts (not methylated) with MED23, MED26, SMARCA2, SMARCB1 and SMARCC1. Interacts with KAT2A and KAT2B. Interacts with ATF5; EP300 is required for ATF5 and CEBPB interaction and DNA binding. Interacts with NFE2L1; the heterodimer represses expression of DSPP during odontoblast differentiation. In terms of processing, methylated. Methylation at Arg-3 by CARM1 and at Lys-43 by EHMT2 inhibit transactivation activity. Methylation is probably inhibited by phosphorylation at Thr-236. Sumoylated by polymeric chains of SUMO2 or SUMO3. Sumoylation at Lys-174 is required for inhibition of T-cells proliferation. In adipocytes, sumoylation at Lys-174 by PIAS1 leads to ubiquitination and subsequent proteasomal degradation. Desumoylated by SENP2, which abolishes ubiquitination and stabilizes protein levels. Post-translationally, ubiquitinated, leading to proteasomal degradation. In terms of processing, phosphorylated at Thr-236 by MAPK and CDK2, serves to prime phosphorylation at Thr-227 and Ser-232 by GSK3B and acquire DNA-binding as well as transactivation activities, required to induce adipogenesis. MAPK and CDK2 act sequentially to maintain Thr-236 in the primed phosphorylated state during mitotical cloning expansion and thereby progression of terminal differentiation. Phosphorylation at Thr-269 enhances transactivation activity. Phosphorylation at Ser-328 in response to calcium increases transactivation activity. Phosphorylated at Thr-236 by RPS6KA1. O-glycosylated, glycosylation at Ser-228 and Ser-229 prevents phosphorylation on Thr-236, Ser-232 and Thr-227 and DNA binding activity which delays the adipocyte differentiation program. Post-translationally, acetylated. Acetylation at Lys-43 is an important and dynamic regulatory event that contributes to its ability to transactivate target genes, including those associated with adipogenesis and adipocyte function. Deacetylation by HDAC1 represses its transactivation activity. Acetylated by KAT2A and KAT2B within a cluster of lysine residues between amino acids 129-133, this acetylation is strongly induced by glucocorticoid treatment and enhances transactivation activity.

It is found in the nucleus. Its subcellular location is the cytoplasm. Functionally, important transcription factor regulating the expression of genes involved in immune and inflammatory responses. Also plays a significant role in adipogenesis, as well as in the gluconeogenic pathway, liver regeneration, and hematopoiesis. The consensus recognition site is 5'-T[TG]NNGNAA[TG]-3'. Its functional capacity is governed by protein interactions and post-translational protein modifications. During early embryogenesis, plays essential and redundant roles with CEBPA. Has a promitotic effect on many cell types such as hepatocytes and adipocytes but has an antiproliferative effect on T-cells by repressing MYC expression, facilitating differentiation along the T-helper 2 lineage. Binds to regulatory regions of several acute-phase and cytokines genes and plays a role in the regulation of acute-phase reaction and inflammation. Also plays a role in intracellular bacteria killing. During adipogenesis, is rapidly expressed and, after activation by phosphorylation, induces CEBPA and PPARG, which turn on the series of adipocyte genes that give rise to the adipocyte phenotype. The delayed transactivation of the CEBPA and PPARG genes by CEBPB appears necessary to allow mitotic clonal expansion and thereby progression of terminal differentiation. Essential for female reproduction because of a critical role in ovarian follicle development. Restricts osteoclastogenesis: together with NFE2L1; represses expression of DSPP during odontoblast differentiation. The sequence is that of CCAAT/enhancer-binding protein beta (CEBPB) from Bos taurus (Bovine).